Here is a 127-residue protein sequence, read N- to C-terminus: Large ribosomal subunit protein bL12c (127 aa).

The interval 104-127 (GVAKDAAEEAKKQIEDAGGKASLK) is disordered. A compositionally biased stretch (basic and acidic residues) spans 105-121 (VAKDAAEEAKKQIEDAG).

This sequence belongs to the bacterial ribosomal protein bL12 family. In terms of assembly, homodimer. Part of the ribosomal stalk of the 50S ribosomal subunit. Forms a multimeric L10(L12)X complex, where L10 forms an elongated spine to which 2 to 4 L12 dimers bind in a sequential fashion. Binds GTP-bound translation factors.

Its subcellular location is the plastid. The protein localises to the chloroplast. Its function is as follows. Forms part of the ribosomal stalk which helps the ribosome interact with GTP-bound translation factors. Is thus essential for accurate translation. The sequence is that of Large ribosomal subunit protein bL12c from Trieres chinensis (Marine centric diatom).